A 135-amino-acid polypeptide reads, in one-letter code: Congerin-1 (135 aa).

Position 1 is an N-acetylserine (S1). The Galectin domain occupies 3–135 (GLQVKNFDFT…GDARLTLVKE (133 aa)). Residue 70–76 (WETEQRS) coordinates a beta-D-galactoside.

Homodimer.

Its function is as follows. This protein binds beta-galactoside. Its physiological function is not yet known. The sequence is that of Congerin-1 from Conger myriaster (Conger eel).